We begin with the raw amino-acid sequence, 427 residues long: MVSHYYNTLPYTQKHSAANLAYASAAGQPWNWTPNYHHTPPNHQFLGDVDSSHAAHHAAAAHQMYYNSHHMFHSAAAASAGEWHSPASSTADNFVQNVPTSAHQLMQQHHHHHAHASSSSASSGSSSSGGAPGAPQLNETNSSIGVGGAGGGGGVGGATDGGPGSAPPNHQQHIAEGLPSPPITVSGSEISSPGAPTSASSPHHHLAHHLSAVANNNNNNNNNNNSPSTHNNNNNNNSVSNNNRTSPSKPPYFDWMKKPAYPAQPQPGKTRTKDKYRVVYTDFQRLELEKEYCTSRYITIRRKSELAQTLSLSERQVKIWFQNRRAKERKQNKKGSDPNVMGVGVQHADYSQLLDAKAKLEPGLHLSHSLAHSMNPMAAMNIPAMRLHPHLAAHSHSLAAVAAHSHQLQQQHSAQMSAAAAVGTLSM.

The tract at residues 104 to 273 (QLMQQHHHHH…QPQPGKTRTK (170 aa)) is disordered. Over residues 116 to 129 (ASSSSASSGSSSSG) the composition is skewed to low complexity. A compositionally biased stretch (gly residues) spans 145-164 (GVGGAGGGGGVGGATDGGPG). Residues 183–195 (ITVSGSEISSPGA) are compositionally biased toward polar residues. Residues 209 to 243 (HLSAVANNNNNNNNNNNSPSTHNNNNNNNSVSNNN) are compositionally biased toward low complexity. Thr245 bears the Phosphothreonine mark. The Antp-type hexapeptide signature appears at 252–257 (YFDWMK). Residues 273-332 (KDKYRVVYTDFQRLELEKEYCTSRYITIRRKSELAQTLSLSERQVKIWFQNRRAKERKQN) constitute a DNA-binding region (homeobox).

Belongs to the Caudal homeobox family. Maternally localized in an anteroposterior gradient in the syncytial blastoderm. Also expressed in the pole cells. Zygotically localized in the primordia of the terminal abdominal segment, the hindgut and in the posterior midgut rudiment. Expressed in the gut, the gonads and parts of the genital disks of third instar larvae (at protein level).

Its subcellular location is the nucleus. In terms of biological role, caudal (cad) is one of a number of transcription factors controlling segmentation of the embryo. Further transcriptional regulation via a 5' flanking region containing DNA replication-related elements (DRE) and by dref also regulated by trh and tgo via the CNS midline element. Alongside Bicoid (bcd), caudal forms concentration gradients down the anterior-posterior (A-P) axis providing positional information and subsequent induction of the gap genes. Plays a role in gastrulation/germ band extension, hindgut morphogenesis, positive regulation of cell proliferation, genital disk development and pattern formation. Acts as a key regulator of the Hox gene network and activates transcription via the downstream core promoter element (DPE) relative to the TATA box. Plays a role in the establishment of the hindgut and in the invagination of the hindgut primordium during gastrulation. These effects on the gut are achieved by acting combinatorially at the posterior of the embryo to activate transcription of different targets including fog, fkh and wg. Caudal is involved in regulation of proliferation through transactivation of the E2F gene. Postembryonically its function is mostly restricted to the intestine where it regulates antimicrobial peptide (AMP) levels preserving the normal gut flora. This Drosophila melanogaster (Fruit fly) protein is Homeotic protein caudal (cad).